The following is a 156-amino-acid chain: Class I hydrophobin B (156 aa).

Positions 1 to 18 (MQFTLSAVVLALAGFSAA) are cleaved as a signal peptide. 4 disulfides stabilise this stretch: Cys-52-Cys-130, Cys-60-Cys-124, Cys-61-Cys-101, and Cys-131-Cys-149.

Belongs to the fungal hydrophobin family.

It localises to the secreted. Its subcellular location is the cell wall. Aerial growth, conidiation, and dispersal of filamentous fungi in the environment rely upon a capability of their secreting small amphipathic proteins called hydrophobins (HPBs) with low sequence identity. Class I can self-assemble into an outermost layer of rodlet bundles on aerial cell surfaces, conferring cellular hydrophobicity that supports fungal growth, development and dispersal; whereas Class II form highly ordered films at water-air interfaces through intermolecular interactions but contribute nothing to the rodlet structure. In P.expansum, hydrophobins contribute to germination, tolerance to cold stress and mycotoxins patulin and citrinin production. HfbA and HfbB are essential for fungal surface hydrophobicity. This is Class I hydrophobin B from Penicillium expansum (Blue mold rot fungus).